An 81-amino-acid chain; its full sequence is Photosystem I iron-sulfur center (81 aa).

2 consecutive 4Fe-4S ferredoxin-type domains span residues 2 to 31 (SHSV…MIPW) and 39 to 68 (IASA…VRVY). [4Fe-4S] cluster is bound by residues cysteine 11, cysteine 14, cysteine 17, cysteine 21, cysteine 48, cysteine 51, cysteine 54, and cysteine 58.

The eukaryotic PSI reaction center is composed of at least 11 subunits. Requires [4Fe-4S] cluster as cofactor.

The protein resides in the plastid. It localises to the chloroplast thylakoid membrane. The enzyme catalyses reduced [plastocyanin] + hnu + oxidized [2Fe-2S]-[ferredoxin] = oxidized [plastocyanin] + reduced [2Fe-2S]-[ferredoxin]. Its function is as follows. Apoprotein for the two 4Fe-4S centers FA and FB of photosystem I (PSI); essential for photochemical activity. FB is the terminal electron acceptor of PSI, donating electrons to ferredoxin. The C-terminus interacts with PsaA/B/D and helps assemble the protein into the PSI complex. Required for binding of PsaD and PsaE to PSI. PSI is a plastocyanin-ferredoxin oxidoreductase, converting photonic excitation into a charge separation, which transfers an electron from the donor P700 chlorophyll pair to the spectroscopically characterized acceptors A0, A1, FX, FA and FB in turn. The protein is Photosystem I iron-sulfur center of Zea mays (Maize).